The chain runs to 155 residues: Ribosome maturation factor RimP (155 aa).

It belongs to the RimP family.

It is found in the cytoplasm. Its function is as follows. Required for maturation of 30S ribosomal subunits. The protein is Ribosome maturation factor RimP of Agathobacter rectalis (strain ATCC 33656 / DSM 3377 / JCM 17463 / KCTC 5835 / VPI 0990) (Eubacterium rectale).